The sequence spans 244 residues: 5-oxoprolinase subunit A (244 aa).

The protein belongs to the LamB/PxpA family. Forms a complex composed of PxpA, PxpB and PxpC.

The catalysed reaction is 5-oxo-L-proline + ATP + 2 H2O = L-glutamate + ADP + phosphate + H(+). Catalyzes the cleavage of 5-oxoproline to form L-glutamate coupled to the hydrolysis of ATP to ADP and inorganic phosphate. The polypeptide is 5-oxoprolinase subunit A (Shigella sonnei (strain Ss046)).